Reading from the N-terminus, the 474-residue chain is ATP synthase subunit beta (474 aa).

151–158 (GGAGVGKT) is an ATP binding site.

Belongs to the ATPase alpha/beta chains family. In terms of assembly, F-type ATPases have 2 components, CF(1) - the catalytic core - and CF(0) - the membrane proton channel. CF(1) has five subunits: alpha(3), beta(3), gamma(1), delta(1), epsilon(1). CF(0) has three main subunits: a(1), b(2) and c(9-12). The alpha and beta chains form an alternating ring which encloses part of the gamma chain. CF(1) is attached to CF(0) by a central stalk formed by the gamma and epsilon chains, while a peripheral stalk is formed by the delta and b chains.

Its subcellular location is the cell inner membrane. The enzyme catalyses ATP + H2O + 4 H(+)(in) = ADP + phosphate + 5 H(+)(out). Its function is as follows. Produces ATP from ADP in the presence of a proton gradient across the membrane. The catalytic sites are hosted primarily by the beta subunits. The chain is ATP synthase subunit beta from Paracoccus denitrificans (strain Pd 1222).